The following is a 350-amino-acid chain: uncharacterized protein (350 aa).

Residues 1–26 (MKKSGWLVVALIALVVLGVVTSIAVN) form the signal peptide.

This is an uncharacterized protein from Archaeoglobus fulgidus (strain ATCC 49558 / DSM 4304 / JCM 9628 / NBRC 100126 / VC-16).